The sequence spans 873 residues: Zinc fingers and homeoboxes protein 1 (873 aa).

The tract at residues 1–63 (MASRRKSTTP…ESVDSDNQQN (63 aa)) is disordered. A compositionally biased stretch (acidic residues) spans 18–30 (QDPDLELISDLDE). A Phosphothreonine modification is found at T36. S45, S47, and S48 each carry phosphoserine. 2 C2H2-type zinc fingers span residues 70–93 (YECKYCTFQTPDLNMFTFHVDSEH) and 102–125 (YVCVECNFLTKRYDALSEHNLKYH). A Glycyl lysine isopeptide (Lys-Gly) (interchain with G-Cter in SUMO2) cross-link involves residue K159. The residue at position 202 (S202) is a Phosphoserine. A disordered region spans residues 202–236 (SVEDVPEEKENEIKPDREEIVENPSSSASESNTST). Positions 212–221 (NEIKPDREEI) are enriched in basic and acidic residues. Residues 223–236 (ENPSSSASESNTST) are compositionally biased toward low complexity. The required for dimerization stretch occupies residues 272–432 (NSNLIPKVLI…QNNVQKSQVP (161 aa)). The tract at residues 272–564 (NSNLIPKVLI…AQPKQSWNPF (293 aa)) is required for interaction with NFYA. Residues 284–346 (NSIPTYNAAL…LKHGVSWTPE (63 aa)) constitute a DNA-binding region (homeobox 1). Residues K441, K454, K485, and K629 each participate in a glycyl lysine isopeptide (Lys-Gly) (interchain with G-Cter in SUMO2) cross-link. 2 consecutive DNA-binding regions (homeobox) follow at residues 464–526 (SFGI…KSNQ) and 569–630 (PQKF…EEKM). Disordered stretches follow at residues 626–667 (KEEK…ICKK) and 732–769 (SSMNGLSSLRKRGRGRPKGRGRGRPRGRPRGSKRINNW). S648 carries the phosphoserine modification. The homeobox 4 DNA-binding region spans 660 to 722 (STGKICKKTP…YAWKNGNLKW (63 aa)). Positions 734–768 (MNGLSSLRKRGRGRPKGRGRGRPRGRPRGSKRINN) are required for nuclear localization. Residues 740 to 764 (LRKRGRGRPKGRGRGRPRGRPRGSK) show a composition bias toward basic residues. Phosphoserine is present on S774. A DNA-binding region (homeobox 5) is located at residues 777–832 (KFKTGTAILKDYYLKHKFLNEQDLDELVNKSHMGYEQVREWFAERQRRSELGIELF). Residues 829-873 (IELFEENEEEDEVIDDQEEDEEETDDSDTWEPPRHVKRKLSKSDD) are disordered. Positions 831–857 (LFEENEEEDEVIDDQEEDEEETDDSDT) are enriched in acidic residues. Positions 831–873 (LFEENEEEDEVIDDQEEDEEETDDSDTWEPPRHVKRKLSKSDD) are required for repressor activity. The span at 863–873 (HVKRKLSKSDD) shows a compositional bias: basic residues.

This sequence belongs to the ZHX family. Forms homodimers. Also forms heterodimers with ZHX3 which is a prerequisite for repressor activity and with ZHX2. Interacts with NFYA. Interacts with ATF7IP.

It localises to the nucleus. In terms of biological role, acts as a transcriptional repressor. The polypeptide is Zinc fingers and homeoboxes protein 1 (ZHX1) (Gorilla gorilla gorilla (Western lowland gorilla)).